The chain runs to 201 residues: LexA repressor 1 (201 aa).

Positions 27-47 form a DNA-binding region, H-T-H motif; sequence LAEIAQAFGFASRNAAQKHVQ. Residues Ser-122 and Lys-159 each act as for autocatalytic cleavage activity in the active site.

Belongs to the peptidase S24 family. Homodimer.

It catalyses the reaction Hydrolysis of Ala-|-Gly bond in repressor LexA.. Functionally, represses a number of genes involved in the response to DNA damage (SOS response), including recA and lexA. In the presence of single-stranded DNA, RecA interacts with LexA causing an autocatalytic cleavage which disrupts the DNA-binding part of LexA, leading to derepression of the SOS regulon and eventually DNA repair. The chain is LexA repressor 1 from Xanthomonas campestris pv. campestris (strain ATCC 33913 / DSM 3586 / NCPPB 528 / LMG 568 / P 25).